The following is a 1283-amino-acid chain: Peroxisomal ATPase PEX1 (1283 aa).

The segment at S346 to Q367 is disordered. S354 bears the Phosphoserine mark. Positions P355–Q367 are enriched in basic and acidic residues. ATP is bound by residues G599–S606 and G881–T888. A phosphoserine mark is found at S1181, S1209, and S1211. The interval F1260–A1283 is disordered.

The protein belongs to the AAA ATPase family. In terms of assembly, homooligomer; homooligomerizes in the cytosol, interaction with PEX6 promotes dissociation of the homooligomer. Interacts with PEX6; forming the PEX1-PEX6 AAA ATPase complex, which is composed of a heterohexamer formed by a trimer of PEX1-PEX6 dimers. Interacts indirectly with PEX26, via its interaction with PEX6.

The protein resides in the cytoplasm. The protein localises to the cytosol. It is found in the peroxisome membrane. It catalyses the reaction ATP + H2O = ADP + phosphate + H(+). Functionally, component of the PEX1-PEX6 AAA ATPase complex, a protein dislocase complex that mediates the ATP-dependent extraction of the PEX5 receptor from peroxisomal membranes, an essential step for PEX5 recycling. Specifically recognizes PEX5 monoubiquitinated at 'Cys-11', and pulls it out of the peroxisome lumen through the PEX2-PEX10-PEX12 retrotranslocation channel. Extraction by the PEX1-PEX6 AAA ATPase complex is accompanied by unfolding of the TPR repeats and release of bound cargo from PEX5. In Homo sapiens (Human), this protein is Peroxisomal ATPase PEX1.